Consider the following 78-residue polypeptide: MTEADQVRKRINELYKKKQESGLTEVEEAERKELHKQFIANFRAGFKQQLDSLVIVDDQGKDVTPDKAKQIQKKKVLR.

This sequence belongs to the UPF0291 family.

It is found in the cytoplasm. The polypeptide is UPF0291 protein LBUL_1264 (Lactobacillus delbrueckii subsp. bulgaricus (strain ATCC BAA-365 / Lb-18)).